Here is a 279-residue protein sequence, read N- to C-terminus: Very long chain fatty acid elongase 1 (279 aa).

Met-1 carries the N-acetylmethionine modification. A run of 7 helical transmembrane segments spans residues 23 to 43 (PLMG…YFIL), 61 to 81 (FMIV…YEFL), 110 to 130 (VAWL…IFIL), 137 to 154 (VTFL…SWWW), 176 to 196 (VVMY…PYLW), 203 to 223 (AIQL…YFMP), and 231 to 251 (IIIH…SNFW). Residues 275 to 279 (KVKAN) carry the Di-lysine motif motif.

It belongs to the ELO family. ELOVL1 subfamily. Interacts with LASS2, TECR and HSD17B12. Interacts with TECR. Expressed in a broad variety of tissues. Highly expressed in stomach, lung, kidney, skin and intestine. Moderately expressed in white adipose tissue, liver, spleen, brain, brown adipose tissue, heart and muscle. Weakly expressed in testis.

Its subcellular location is the endoplasmic reticulum membrane. It carries out the reaction a very-long-chain acyl-CoA + malonyl-CoA + H(+) = a very-long-chain 3-oxoacyl-CoA + CO2 + CoA. The catalysed reaction is eicosanoyl-CoA + malonyl-CoA + H(+) = 3-oxodocosanoyl-CoA + CO2 + CoA. It catalyses the reaction docosanoyl-CoA + malonyl-CoA + H(+) = 3-oxotetracosanoyl-CoA + CO2 + CoA. The enzyme catalyses tetracosanoyl-CoA + malonyl-CoA + H(+) = 3-oxohexacosanoyl-CoA + CO2 + CoA. It carries out the reaction (11Z)-eicosenoyl-CoA + malonyl-CoA + H(+) = 3-oxo-(13Z)-docosenoyl-CoA + CO2 + CoA. The catalysed reaction is (13Z)-docosenoyl-CoA + malonyl-CoA + H(+) = 3-oxo-(15Z)-tetracosenoyl-CoA + CO2 + CoA. It functions in the pathway lipid metabolism; fatty acid biosynthesis. Catalyzes the first and rate-limiting reaction of the four reactions that constitute the long-chain fatty acids elongation cycle. This endoplasmic reticulum-bound enzymatic process allows the addition of 2 carbons to the chain of long- and very long-chain fatty acids (VLCFAs) per cycle. Condensing enzyme that exhibits activity toward saturated and monounsaturated acyl-CoA substrates, with the highest activity towards C22:0 acyl-CoA. May participate in the production of both saturated and monounsaturated VLCFAs of different chain lengths that are involved in multiple biological processes as precursors of membrane lipids and lipid mediators. Important for saturated C24:0 and monounsaturated C24:1 sphingolipid synthesis. Indirectly inhibits RPE65 via production of VLCFAs. This is Very long chain fatty acid elongase 1 from Mus musculus (Mouse).